The sequence spans 207 residues: Large ribosomal subunit protein bL9 (207 aa).

Positions 162–176 (QKKEEKAKDEVSATE) are enriched in basic and acidic residues. The tract at residues 162 to 207 (QKKEEKAKDEVSATEKDEELMLSSVTNDNDGDGAKEIVVEGTEESQ) is disordered.

This sequence belongs to the bacterial ribosomal protein bL9 family.

Binds to the 23S rRNA. The protein is Large ribosomal subunit protein bL9 of Ehrlichia ruminantium (strain Gardel).